Reading from the N-terminus, the 414-residue chain is Inositol-tetrakisphosphate 1-kinase (414 aa).

Lys-18 is a 1D-myo-inositol 1,3,4-trisphosphate binding site. ATP is bound by residues Arg-106 and Lys-157. The region spanning 117–325 (EAYMEDDRIC…IATVLQGQST (209 aa)) is the ATP-grasp domain. His-167 and Lys-199 together coordinate 1D-myo-inositol 1,3,4-trisphosphate. ATP contacts are provided by residues 188-199 (QNFINHNAVLYK), Ser-214, Ser-232, and Ser-236. Asp-281, Asp-295, and Asn-297 together coordinate Mg(2+). Asn-297 lines the 1D-myo-inositol 1,3,4-trisphosphate pocket. Residues Lys-340 and Lys-383 each carry the N6-acetyllysine; by EP300 and CREBBP modification. Ser-396 is modified (phosphoserine). Residue Lys-410 is modified to N6-acetyllysine; by EP300 and CREBBP.

It belongs to the ITPK1 family. As to quaternary structure, monomer. Interacts with GPS1/COPS1. Mg(2+) is required as a cofactor. In terms of processing, acetylation by EP300 and CREBBP destabilizes ITPK1, and down-regulates enzymatic activity. Deacetylated by SIRT1. In terms of tissue distribution, expressed in brain &gt; heart &gt; skeletal muscle = kidney = pancreas = liver = placenta &gt; lung. In brain, it is expressed in cerebellum, cerebral cortex, medulla, spinal cord, occipital lobe, frontal lobe, temporal lobe and putamen.

It carries out the reaction 1D-myo-inositol 3,4,5,6-tetrakisphosphate + ATP = 1D-myo-inositol 1,3,4,5,6-pentakisphosphate + ADP + H(+). The catalysed reaction is 1D-myo-inositol 1,3,4-trisphosphate + ATP = 1D-myo-inositol 1,3,4,5-tetrakisphosphate + ADP + H(+). The enzyme catalyses 1D-myo-inositol 1,3,4-trisphosphate + ATP = 1D-myo-inositol 1,3,4,6-tetrakisphosphate + ADP + H(+). It catalyses the reaction 1D-myo-inositol 3,4,6-trisphosphate + ATP = 1D-myo-inositol 1,3,4,6-tetrakisphosphate + ADP + H(+). It carries out the reaction 1D-myo-inositol 1,3,4-trisphosphate + 1D-myo-inositol 1,3,4,5,6-pentakisphosphate = 1D-myo-inositol 3,4,5,6-tetrakisphosphate + 1D-myo-inositol 1,3,4,6-tetrakisphosphate. The catalysed reaction is 1D-myo-inositol 1,3,4-trisphosphate + 1D-myo-inositol 1,3,4,5,6-pentakisphosphate = 1D-myo-inositol 3,4,5,6-tetrakisphosphate + 1D-myo-inositol 1,3,4,5-tetrakisphosphate. In terms of biological role, kinase that can phosphorylate various inositol polyphosphate such as Ins(3,4,5,6)P4 or Ins(1,3,4)P3. Phosphorylates Ins(3,4,5,6)P4 at position 1 to form Ins(1,3,4,5,6)P5. This reaction is thought to have regulatory importance, since Ins(3,4,5,6)P4 is an inhibitor of plasma membrane Ca(2+)-activated Cl(-) channels, while Ins(1,3,4,5,6)P5 is not. Also phosphorylates Ins(1,3,4)P3 on O-5 and O-6 to form Ins(1,3,4,6)P4, an essential molecule in the hexakisphosphate (InsP6) pathway. Also acts as an inositol polyphosphate phosphatase that dephosphorylates Ins(1,3,4,5)P4 and Ins(1,3,4,6)P4 to Ins(1,3,4)P3, and Ins(1,3,4,5,6)P5 to Ins(3,4,5,6)P4. May also act as an isomerase that interconverts the inositol tetrakisphosphate isomers Ins(1,3,4,5)P4 and Ins(1,3,4,6)P4 in the presence of ADP and magnesium. Probably acts as the rate-limiting enzyme of the InsP6 pathway. Modifies TNF-alpha-induced apoptosis by interfering with the activation of TNFRSF1A-associated death domain. Plays an important role in MLKL-mediated necroptosis. Produces highly phosphorylated inositol phosphates such as inositolhexakisphosphate (InsP6) which bind to MLKL mediating the release of an N-terminal auto-inhibitory region leading to its activation. Essential for activated phospho-MLKL to oligomerize and localize to the cell membrane during necroptosis. In Homo sapiens (Human), this protein is Inositol-tetrakisphosphate 1-kinase.